A 726-amino-acid chain; its full sequence is Bromodomain-containing protein 3 (726 aa).

Positions 1-35 (MSTATTVAPAGIPATPGPVNPPPPEVSNPSKPGRK) are disordered. Residue Ser2 is modified to N-acetylserine. The segment covering 15 to 26 (TPGPVNPPPPEV) has biased composition (pro residues). The 107-residue stretch at 34–140 (RKTNQLQYMQ…KIFLQKVAQM (107 aa)) folds into the Bromo 1 domain. The interval 78–80 (KNP) is acetylated histone H3 binding. 2 disordered regions span residues 149 to 169 (PPAP…AGTQ) and 237 to 305 (VKKK…AGKK). A compositionally biased stretch (low complexity) spans 248-261 (TTTPTTSAITASRS). Ser263 and Ser281 each carry phosphoserine. One can recognise a Bromo 2 domain in the interval 306–415 (GKLSEHLRYC…DVFEMRFAKM (110 aa)). A Glycyl lysine isopeptide (Lys-Gly) (interchain with G-Cter in SUMO2) cross-link involves residue Lys414. Disordered stretches follow at residues 421–462 (EAPA…RATR), 477–575 (LAAL…MSYD), and 637–726 (LQKK…SDSE). A coiled-coil region spans residues 453-524 (SDSEEERATR…AEEEKKAKVA (72 aa)). The segment covering 487–503 (KPKKKKEKKEKEKKKKD) has biased composition (basic residues). Basic and acidic residues predominate over residues 504–521 (KEKEKEKHKVKAEEEKKA). Residues 523-540 (VAPPAKQAQQKKAPAKKA) are compositionally biased toward low complexity. One can recognise an NET domain in the interval 562–644 (DSEEEEEGLP…SCLQKKQRKP (83 aa)). Position 563 is a phosphoserine (Ser563). Residues 645-684 (FSASGKKQAAKSKEELAQEKKKELEKRLQDVSGQLSSSKK) adopt a coiled-coil conformation. A compositionally biased stretch (basic and acidic residues) spans 655–673 (KSKEELAQEKKKELEKRLQ). Residues 692-726 (GSAPSGGPSRLSSSSSSESGSSSSSGSSSDSSDSE) show a composition bias toward low complexity.

The protein belongs to the BET family. As to quaternary structure, interacts (via bromo domain 1) with GATA1 acetylated at 'Lys-312' and 'Lys-315'. Interacts (via bromo domain 1) with GATA2 acetylated on lysine residues. Interacts (via NET domain) with CHD4 (via KIKL motif). Interacts (via NET domain) with SMARCA4 (via KIKL motif). Interacts (via NET domain) with NSD3 (via KIKL motif). In terms of assembly, (Microbial infection) Interacts with the Integrase protein of Moloney murine leukemia virus (MLV). In terms of tissue distribution, ubiquitous.

Its subcellular location is the nucleus. It localises to the chromosome. With respect to regulation, inhibited by JQ1, a thieno-triazolo-1,4-diazepine derivative, which specifically inhibits members of the BET family (BRD2, BRD3 and BRD4). The first bromo domain is inhibited by GSK778 (iBET-BD1), which specifically inhibits the first bromo domain of members of the BET family (BRD2, BRD3 and BRD4). The second bromo domain is inhibited by ABBV-744, which specifically inhibits the second bromo domain of members of the BET family (BRD2, BRD3 and BRD4). The second bromo domain is inhibited by GSK046 (iBET-BD2), which specifically inhibits the second bromo domain of members of the BET family (BRD2, BRD3 and BRD4). In terms of biological role, chromatin reader that recognizes and binds acetylated histones, thereby controlling gene expression and remodeling chromatin structures. Recruits transcription factors and coactivators to target gene sites, and activates RNA polymerase II machinery for transcriptional elongation. In vitro, binds acetylated lysine residues on the N-terminus of histone H2A, H2B, H3 and H4. Involved in endoderm differentiation via its association with long non-coding RNA (lncRNA) DIGIT: BRD3 undergoes liquid-liquid phase separation upon binding to lncRNA DIGIT, promoting binding to histone H3 acetylated at 'Lys-18' (H3K18ac) to induce endoderm gene expression. Also binds non-histones acetylated proteins, such as GATA1 and GATA2: regulates transcription by promoting the binding of the transcription factor GATA1 to its targets. The sequence is that of Bromodomain-containing protein 3 from Homo sapiens (Human).